A 182-amino-acid polypeptide reads, in one-letter code: UPF0397 protein BCAH187_A2708 (182 aa).

5 consecutive transmembrane segments (helical) span residues 9 to 29 (VVAIGIGAALYGILGLWGFSI), 40 to 60 (AILTVFGALFGPVAGLLIGLI), 71 to 91 (WGIWWGWVISSGIIGFAMGFI), 114 to 134 (ITGLIGIVIAIIFAGAFDIIV), and 142 to 162 (IVIQVLGATIADVIVFLVLGL).

The protein belongs to the UPF0397 family.

It is found in the cell membrane. The chain is UPF0397 protein BCAH187_A2708 from Bacillus cereus (strain AH187).